The chain runs to 165 residues: MNSLKNLILIGVIKSCHGIQGHVILKSFTEPSTKILERTLVNESGANIRIKLISQNAKGELICTFNDIATRNEAENLKGYKIFCLRTSLPKLEEDEFYIADLNHLQILDQSNKEIGKIKNILNFGAGDIIEIEFLDKTTELLPFNKEFFPIITKDYVILNYQTKV.

Residues 94 to 165 enclose the PRC barrel domain; sequence EDEFYIADLN…YVILNYQTKV (72 aa).

This sequence belongs to the RimM family. As to quaternary structure, binds ribosomal protein uS19.

Its subcellular location is the cytoplasm. An accessory protein needed during the final step in the assembly of 30S ribosomal subunit, possibly for assembly of the head region. Essential for efficient processing of 16S rRNA. May be needed both before and after RbfA during the maturation of 16S rRNA. It has affinity for free ribosomal 30S subunits but not for 70S ribosomes. The chain is Ribosome maturation factor RimM from Rickettsia prowazekii (strain Madrid E).